The sequence spans 233 residues: Glucosamine-6-phosphate deaminase (233 aa).

Asp-62 functions as the Proton acceptor; for enolization step in the catalytic mechanism. The active-site For ring-opening step is the Asn-128. His-130 (proton acceptor; for ring-opening step) is an active-site residue. Residue Glu-135 is the For ring-opening step of the active site.

This sequence belongs to the glucosamine/galactosamine-6-phosphate isomerase family. NagB subfamily.

It catalyses the reaction alpha-D-glucosamine 6-phosphate + H2O = beta-D-fructose 6-phosphate + NH4(+). It functions in the pathway amino-sugar metabolism; N-acetylneuraminate degradation; D-fructose 6-phosphate from N-acetylneuraminate: step 5/5. Catalyzes the reversible isomerization-deamination of glucosamine 6-phosphate (GlcN6P) to form fructose 6-phosphate (Fru6P) and ammonium ion. The sequence is that of Glucosamine-6-phosphate deaminase from Leuconostoc citreum (strain KM20).